Consider the following 26-residue polypeptide: Mitochondrial import receptor subunit TOM7-2 (26 aa).

Belongs to the Tom7 family. Forms part of the preprotein translocase complex of the outer mitochondrial membrane (TOM complex).

The protein localises to the mitochondrion outer membrane. Its function is as follows. Seems to act as a modulator of the dynamics of the mitochondrial protein transport machinery. Seems to promote the dissociation of subunits of the outer membrane translocase. This chain is Mitochondrial import receptor subunit TOM7-2 (TOM7-2), found in Solanum tuberosum (Potato).